Consider the following 144-residue polypeptide: 3-dehydroquinate dehydratase (144 aa).

Tyr-24 serves as the catalytic Proton acceptor. Residues Asn-73, His-79, and Asp-86 each coordinate substrate. His-99 (proton donor) is an active-site residue. Residues 100-101 (LS) and Arg-110 contribute to the substrate site.

The protein belongs to the type-II 3-dehydroquinase family. As to quaternary structure, homododecamer.

It catalyses the reaction 3-dehydroquinate = 3-dehydroshikimate + H2O. It participates in metabolic intermediate biosynthesis; chorismate biosynthesis; chorismate from D-erythrose 4-phosphate and phosphoenolpyruvate: step 3/7. In terms of biological role, catalyzes a trans-dehydration via an enolate intermediate. This is 3-dehydroquinate dehydratase from Shewanella sp. (strain MR-4).